The following is a 365-amino-acid chain: Peptide chain release factor 2 (365 aa).

Q251 is subject to N5-methylglutamine.

The protein belongs to the prokaryotic/mitochondrial release factor family. In terms of processing, methylated by PrmC. Methylation increases the termination efficiency of RF2.

The protein resides in the cytoplasm. Functionally, peptide chain release factor 2 directs the termination of translation in response to the peptide chain termination codons UGA and UAA. The chain is Peptide chain release factor 2 from Neorickettsia sennetsu (strain ATCC VR-367 / Miyayama) (Ehrlichia sennetsu).